A 428-amino-acid chain; its full sequence is Glutamate-1-semialdehyde 2,1-aminomutase 1 (428 aa).

N6-(pyridoxal phosphate)lysine is present on Lys267.

It belongs to the class-III pyridoxal-phosphate-dependent aminotransferase family. HemL subfamily. Homodimer. Pyridoxal 5'-phosphate serves as cofactor.

It localises to the cytoplasm. It catalyses the reaction (S)-4-amino-5-oxopentanoate = 5-aminolevulinate. The protein operates within porphyrin-containing compound metabolism; protoporphyrin-IX biosynthesis; 5-aminolevulinate from L-glutamyl-tRNA(Glu): step 2/2. This Staphylococcus aureus (strain MW2) protein is Glutamate-1-semialdehyde 2,1-aminomutase 1.